A 591-amino-acid chain; its full sequence is Metalloendopeptidase OPG085 (591 aa).

Residue H41 coordinates Zn(2+). Residue E44 is part of the active site. Positions 45 and 112 each coordinate Zn(2+).

It belongs to the peptidase M44 family. Requires Zn(2+) as cofactor. In terms of processing, undergoes proteolytic processing during the course of infection. May be cleaved into 46 kDa and 22 kDa products (Potential).

It localises to the virion. Functionally, probably involved in maturation of some viral proteins by processing them preferentially at Ala-Gly-|-Ser/Thr/Lys motifs. Does not seem to be responsible for the cleavage of major core proteins. This Homo sapiens (Human) protein is Metalloendopeptidase OPG085 (OPG085).